A 502-amino-acid chain; its full sequence is MAGMLREVCGAAASGLRVRFGPSPTGFLHLGGLRTALYNYVFAKQQRGTFVLRVEDTDQGRVVAGAAESIEDMLHWAGIPPDESPRRGGPFGPYQQSLRLDLYRAASEALLDRGAAYRCFCTPQRLELLRKEALRNQQTPRYDNRCRHLTPKEVAEKLAQGLDWVVRFRLERGVEPFQDLVYGWNKHEVAEVEGDPVILKADGFPTYHLANVVDDHHMGISHVLRGTEWLTSTSKHLLLYKAFGWDPPQFGHLPLLLNKDGSKLSKRQGDIFLERFAQEGYLPEALLDMITNCGSGFAEKQMGRTLEELISQFEIGRITTHSALLDLEKLPEFNRMHLTRHIENEGLRQKLIQELQLLVEDVYGDQEVDKEVLEKEYVEQVLLLRKGHISHLKDLVSDNYSYLWVRPSVSREQLQMISAEVDEIGKLVLGLMTKPAAVWTIEELNKDLRSLQKQTRETKYSSMMKLLRLALSGQQHGPSVAEMMVTLGPREVCGRISKVLSS.

The N-terminal 20 residues, 1–20 (MAGMLREVCGAAASGLRVRF), are a transit peptide targeting the mitochondrion. 19–21 (RFG) lines the L-glutamate pocket. Residues 24-32 (PTGFLHLGG) carry the 'HIGH' region motif. Histidine 29 is a binding site for ATP. Residues glutamate 55, 207 to 211 (YHLAN), and arginine 225 each bind L-glutamate. ATP-binding positions include glutamate 228 and 263–267 (KLSKR). The short motif at 263 to 267 (KLSKR) is the 'KMSKS' region element.

This sequence belongs to the class-I aminoacyl-tRNA synthetase family. Glutamate--tRNA ligase type 1 subfamily.

The protein resides in the mitochondrion matrix. It catalyses the reaction tRNA(Glx) + L-glutamate + ATP = L-glutamyl-tRNA(Glx) + AMP + diphosphate. It carries out the reaction tRNA(Glu) + L-glutamate + ATP = L-glutamyl-tRNA(Glu) + AMP + diphosphate. The enzyme catalyses tRNA(Gln) + L-glutamate + ATP = L-glutamyl-tRNA(Gln) + AMP + diphosphate. Non-discriminating glutamyl-tRNA synthetase that catalyzes aminoacylation of both mitochondrial tRNA(Glu) and tRNA(Gln) and participates in RNA aminoacylation for mitochondrial protein translation. Attachs glutamate to tRNA(Glu) or tRNA(Gln) in a two-step reaction: glutamate is first activated by ATP to form Glu-AMP and then transferred to the acceptor end of tRNA(Glu) or tRNA(Gln). In Gallus gallus (Chicken), this protein is Nondiscriminating glutamyl-tRNA synthetase EARS2, mitochondrial.